The following is a 246-amino-acid chain: Bromelain inhibitor (246 aa).

The signal sequence occupies residues 1 to 19 (MNMLLLFLHEVINGERVTL). 5 cysteine pairs are disulfide-bonded: Cys22–Cys42, Cys25–Cys74, Cys27–Cys40, Cys49–Cys56, and Cys53–Cys65. The propeptide occupies 31–35 (TSSSD). 2 propeptides span residues 77 to 95 (PVSSSEAKQKMIKGERVTL) and 107 to 111 (TSSSD). Intrachain disulfides connect Cys98-Cys118, Cys101-Cys150, Cys103-Cys116, Cys125-Cys132, and Cys129-Cys141. 2 propeptides span residues 153–171 (PVSSLEAKQNMIKEERVTL) and 183–187 (TSSSD). Intrachain disulfides connect Cys174-Cys194, Cys177-Cys226, Cys179-Cys192, Cys201-Cys208, and Cys205-Cys217. A propeptide spanning residues 229-246 (PVSSWEARQKIKLLQGRE) is cleaved from the precursor.

It belongs to the protease inhibitor I67 family. In terms of assembly, each inhibitor is composed of two chains, designated A and B linked by three disulfide bonds.

Its function is as follows. Weak inhibitor of cysteine proteinases. This is Bromelain inhibitor from Ananas comosus (Pineapple).